Here is a 234-residue protein sequence, read N- to C-terminus: ATP-dependent dethiobiotin synthetase BioD (234 aa).

An ATP-binding site is contributed by 12-17 (DVGKTI). Thr-16 is a binding site for Mg(2+). Residue Lys-37 is part of the active site. Thr-41 serves as a coordination point for substrate. ATP is bound by residues Asp-54 and 115 to 118 (EGAG). Mg(2+) contacts are provided by Asp-54 and Glu-115.

It belongs to the dethiobiotin synthetase family. Homodimer. It depends on Mg(2+) as a cofactor.

Its subcellular location is the cytoplasm. The enzyme catalyses (7R,8S)-7,8-diammoniononanoate + CO2 + ATP = (4R,5S)-dethiobiotin + ADP + phosphate + 3 H(+). It participates in cofactor biosynthesis; biotin biosynthesis; biotin from 7,8-diaminononanoate: step 1/2. Functionally, catalyzes a mechanistically unusual reaction, the ATP-dependent insertion of CO2 between the N7 and N8 nitrogen atoms of 7,8-diaminopelargonic acid (DAPA, also called 7,8-diammoniononanoate) to form a ureido ring. This is ATP-dependent dethiobiotin synthetase BioD from Lysinibacillus sphaericus (strain C3-41).